The following is a 145-amino-acid chain: 3-dehydroquinate dehydratase (145 aa).

The active-site Proton acceptor is the Tyr24. Substrate contacts are provided by Asn75, His81, and Asp88. Residue His101 is the Proton donor of the active site. Substrate-binding positions include 102–103 and Arg112; that span reads IS.

This sequence belongs to the type-II 3-dehydroquinase family. In terms of assembly, homododecamer.

The enzyme catalyses 3-dehydroquinate = 3-dehydroshikimate + H2O. The protein operates within metabolic intermediate biosynthesis; chorismate biosynthesis; chorismate from D-erythrose 4-phosphate and phosphoenolpyruvate: step 3/7. In terms of biological role, catalyzes a trans-dehydration via an enolate intermediate. This is 3-dehydroquinate dehydratase from Rhizobium etli (strain CIAT 652).